We begin with the raw amino-acid sequence, 424 residues long: Trigger factor (424 aa).

The 86-residue stretch at 163–248 (GDTVVLDFEG…IHEIKAKELP (86 aa)) folds into the PPIase FKBP-type domain.

It belongs to the FKBP-type PPIase family. Tig subfamily.

It localises to the cytoplasm. The catalysed reaction is [protein]-peptidylproline (omega=180) = [protein]-peptidylproline (omega=0). Its function is as follows. Involved in protein export. Acts as a chaperone by maintaining the newly synthesized protein in an open conformation. Functions as a peptidyl-prolyl cis-trans isomerase. The protein is Trigger factor of Bacillus pumilus (strain SAFR-032).